The sequence spans 253 residues: Testis-expressed protein 101 (253 aa).

The signal sequence occupies residues 1 to 24 (MAACWVHYLLLLLLGVSHQTLAQS). 5 N-linked (GlcNAc...) asparagine glycosylation sites follow: N44, N112, N117, N121, and N162. One can recognise a UPAR/Ly6 1 domain in the interval 53–117 (ETCNPGELCQ…SNYCNSSLCN (65 aa)). The 76-residue stretch at 143–218 (CPTCVALGSC…KETCSYHSLL (76 aa)) folds into the UPAR/Ly6 2 domain. A lipid anchor (GPI-anchor amidated serine) is attached at S226. Residues 227-253 (RASGRSTSLWVLELLLPAVLVALTHFP) constitute a propeptide, removed in mature form.

Interacts with VAMP3. Interacts with LY6K. Interacts with DPEP3; co-localized on the cell surface of spermatocytes, spermatids, and testicular spermatozoa, co-localized only in cytoplasmic droplets of caput and corpus epididymal sperm. Interacts with ADAM5. N-glycosylated; by high mannose and/or biantennary complex and/or certain types of hybrid oligosaccharides; possesses different oligosaccharides chains according to its subcellular localization in the testis. In terms of processing, sheds from membrane raft by ACE and released from the cell surface of epididymal sperm while it passes through the caput epididymis leading to disappearance of TEX101 on spermatozoa; is essential to produce fertile spermatozoa.

It is found in the cell membrane. Its subcellular location is the membrane raft. It localises to the cytoplasmic vesicle. The protein localises to the secretory vesicle. The protein resides in the acrosome. It is found in the secreted. Functionally, plays a role in fertilization by controlling binding of sperm to zona pellucida and migration of spermatozoa into the oviduct. May play a role in signal transduction and promote protein tyrosine phosphorylation. This chain is Testis-expressed protein 101, found in Cricetulus griseus (Chinese hamster).